Here is a 228-residue protein sequence, read N- to C-terminus: Urease accessory protein UreF (228 aa).

The protein belongs to the UreF family. UreD, UreF and UreG form a complex that acts as a GTP-hydrolysis-dependent molecular chaperone, activating the urease apoprotein by helping to assemble the nickel containing metallocenter of UreC. The UreE protein probably delivers the nickel.

It localises to the cytoplasm. Functionally, required for maturation of urease via the functional incorporation of the urease nickel metallocenter. This is Urease accessory protein UreF from Prochlorococcus marinus (strain MIT 9301).